The chain runs to 329 residues: MKKWGVGFTLLLASTSILAKDIQLLNVSYDPTRELYEQYNKAFSAHWKQETGDNVVIRQSHGGSGKQATSVINGIEADVVTLALAYDVDAIAERGRIDKNWIKRLPDNSAPYTSTIVFLVRKGNPKQIHDWNDLIKPGVSVITPNPKSSGGARWNYLAAWGYALHHNNNDQAKAQDFVKALFKNVEVLDSGARGSTNTFVERGIGDVLIAWENEALLATNELGKDKFEIVTPSESILAEPTVSVVDKVVEKKDTKAVAEAYLKYLYSPEGQEIAAKNFYRPRDADVAKKYDDAFPKLKLFTIDEVFGGWAKAQKDHFANGGTFDQISKR.

The N-terminal stretch at 1–19 is a signal peptide; that stretch reads MKKWGVGFTLLLASTSILA.

The protein belongs to the prokaryotic sulfate-binding protein family.

Its subcellular location is the periplasm. Its function is as follows. This protein specifically binds sulfate and is involved in its transmembrane transport. This is Sulfate-binding protein (sbp) from Salmonella typhimurium (strain LT2 / SGSC1412 / ATCC 700720).